We begin with the raw amino-acid sequence, 685 residues long: Beta-taxilin (685 aa).

The segment at 1–135 (MEINHPDQLS…KEPVSNKEQK (135 aa)) is disordered. Residues 18-28 (GDSSSLNQNGP) show a composition bias toward polar residues. 2 stretches are compositionally biased toward basic and acidic residues: residues 47 to 67 (GSLHPEKGAHDVAEELSRQLE) and 80 to 90 (RGKESTSETKE). Residues 98 to 113 (PDNEDVDYEETTEEID) show a composition bias toward acidic residues. Coiled coils occupy residues 138–354 (KKIL…VLKE) and 381–470 (NEVF…SEKE). Residues 465 to 478 (KMSEKEDQVQRTSE) are compositionally biased toward basic and acidic residues. Disordered regions lie at residues 465-497 (KMSEKEDQVQRTSEEEPEPSVSENEEVDAEEAN) and 517-685 (EFTP…NGVD). Phosphoserine occurs at positions 477, 484, and 486. Acidic residues predominate over residues 479–495 (EEPEPSVSENEEVDAEE). The segment covering 575 to 591 (CEATPAPTASCTPAEAE) has biased composition (low complexity). The span at 612 to 627 (ANTSGQAPLSPAQGSL) shows a compositional bias: polar residues.

The protein belongs to the taxilin family. As to quaternary structure, binds to the C-terminal coiled coil region of syntaxin family members STX1A, STX3A and STX4A. Has a preference for STX1A. As to expression, specifically expressed in skeletal muscle.

Promotes motor nerve regeneration. May be involved in intracellular vesicle traffic. The polypeptide is Beta-taxilin (Txlnb) (Mus musculus (Mouse)).